The following is a 308-amino-acid chain: Ornithine carbamoyltransferase (308 aa).

Carbamoyl phosphate-binding positions include 52-55 (STRT), Gln-79, Arg-103, and 130-133 (HPLQ). Residues Asn-162, Asp-224, and 228–229 (SM) contribute to the L-ornithine site. Residues 264 to 265 (CL) and Arg-292 each bind carbamoyl phosphate.

The protein belongs to the aspartate/ornithine carbamoyltransferase superfamily. OTCase family.

It localises to the cytoplasm. The enzyme catalyses carbamoyl phosphate + L-ornithine = L-citrulline + phosphate + H(+). It functions in the pathway amino-acid biosynthesis; L-arginine biosynthesis; L-arginine from L-ornithine and carbamoyl phosphate: step 1/3. Its function is as follows. Reversibly catalyzes the transfer of the carbamoyl group from carbamoyl phosphate (CP) to the N(epsilon) atom of ornithine (ORN) to produce L-citrulline. The chain is Ornithine carbamoyltransferase from Pyrobaculum calidifontis (strain DSM 21063 / JCM 11548 / VA1).